The sequence spans 316 residues: Methionyl-tRNA formyltransferase (316 aa).

A (6S)-5,6,7,8-tetrahydrofolate-binding site is contributed by 112–115 (SLLP).

The protein belongs to the Fmt family.

The enzyme catalyses L-methionyl-tRNA(fMet) + (6R)-10-formyltetrahydrofolate = N-formyl-L-methionyl-tRNA(fMet) + (6S)-5,6,7,8-tetrahydrofolate + H(+). Functionally, attaches a formyl group to the free amino group of methionyl-tRNA(fMet). The formyl group appears to play a dual role in the initiator identity of N-formylmethionyl-tRNA by promoting its recognition by IF2 and preventing the misappropriation of this tRNA by the elongation apparatus. In Glaesserella parasuis serovar 5 (strain SH0165) (Haemophilus parasuis), this protein is Methionyl-tRNA formyltransferase.